Consider the following 315-residue polypeptide: Long form salivary protein D7L1 (315 aa).

An N-terminal signal peptide occupies residues 1–18 (MIIVAVLLSFLAHLLVQA). 2 cysteine pairs are disulfide-bonded: C37–C73 and C69–C128. Thromboxane A2 is bound at residue W55. W58 contributes to the leukotriene C4 binding site. Position 70 (Y70) interacts with thromboxane A2. Leukotriene C4 contacts are provided by G152 and K170. Residue K170 coordinates thromboxane A2. Cystine bridges form between C178/C211 and C252/C263.

The protein belongs to the PBP/GOBP family. As to expression, distal-lateral and median lobes of female salivary gland (at protein level). Not detected in male salivary gland (at protein level). Expressed in female salivary gland. Not detected in female carcass without salivary glands. Expressed in male salivary gland and other tissues.

It localises to the secreted. Functionally, modulates blood feeding of female mosquitoes on vertebrate species by binding and sequestering different mediators involved in the host response. Binds leukotriene C4, leukotriene D4, leukotriene E4 and stable analogs of thromboxane A2, U-46619 and carbocyclic TXA2. Binds weakly prostaglandins: PGD2, PGE2 and PGF2alpha. Does not bind leukotriene B4, biogenic amines, ADP, platelet activating phospholipid derivative PAF and arachidonic acid. Inhibits agonist-induced smooth muscle contraction. Inhibits platelet aggregation induced by low concentrations of collagen in thromboxane A2-dependent manner. This chain is Long form salivary protein D7L1, found in Anopheles stephensi (Indo-Pakistan malaria mosquito).